The chain runs to 231 residues: Large ribosomal subunit protein uL1 (231 aa).

It belongs to the universal ribosomal protein uL1 family. As to quaternary structure, part of the 50S ribosomal subunit.

Binds directly to 23S rRNA. The L1 stalk is quite mobile in the ribosome, and is involved in E site tRNA release. Its function is as follows. Protein L1 is also a translational repressor protein, it controls the translation of the L11 operon by binding to its mRNA. The polypeptide is Large ribosomal subunit protein uL1 (Francisella tularensis subsp. tularensis (strain FSC 198)).